Consider the following 309-residue polypeptide: 4-hydroxy-3-methylbut-2-enyl diphosphate reductase (309 aa).

Residue cysteine 12 participates in [4Fe-4S] cluster binding. (2E)-4-hydroxy-3-methylbut-2-enyl diphosphate is bound by residues histidine 41 and histidine 74. Dimethylallyl diphosphate contacts are provided by histidine 41 and histidine 74. Positions 41 and 74 each coordinate isopentenyl diphosphate. [4Fe-4S] cluster is bound at residue cysteine 96. A (2E)-4-hydroxy-3-methylbut-2-enyl diphosphate-binding site is contributed by histidine 124. Histidine 124 serves as a coordination point for dimethylallyl diphosphate. Histidine 124 provides a ligand contact to isopentenyl diphosphate. Glutamate 126 functions as the Proton donor in the catalytic mechanism. Threonine 167 is a binding site for (2E)-4-hydroxy-3-methylbut-2-enyl diphosphate. Position 197 (cysteine 197) interacts with [4Fe-4S] cluster. (2E)-4-hydroxy-3-methylbut-2-enyl diphosphate contacts are provided by serine 225, serine 226, asparagine 227, and serine 269. Dimethylallyl diphosphate is bound by residues serine 225, serine 226, asparagine 227, and serine 269. Residues serine 225, serine 226, asparagine 227, and serine 269 each coordinate isopentenyl diphosphate.

It belongs to the IspH family. It depends on [4Fe-4S] cluster as a cofactor.

It catalyses the reaction isopentenyl diphosphate + 2 oxidized [2Fe-2S]-[ferredoxin] + H2O = (2E)-4-hydroxy-3-methylbut-2-enyl diphosphate + 2 reduced [2Fe-2S]-[ferredoxin] + 2 H(+). The catalysed reaction is dimethylallyl diphosphate + 2 oxidized [2Fe-2S]-[ferredoxin] + H2O = (2E)-4-hydroxy-3-methylbut-2-enyl diphosphate + 2 reduced [2Fe-2S]-[ferredoxin] + 2 H(+). The protein operates within isoprenoid biosynthesis; dimethylallyl diphosphate biosynthesis; dimethylallyl diphosphate from (2E)-4-hydroxy-3-methylbutenyl diphosphate: step 1/1. It participates in isoprenoid biosynthesis; isopentenyl diphosphate biosynthesis via DXP pathway; isopentenyl diphosphate from 1-deoxy-D-xylulose 5-phosphate: step 6/6. Functionally, catalyzes the conversion of 1-hydroxy-2-methyl-2-(E)-butenyl 4-diphosphate (HMBPP) into a mixture of isopentenyl diphosphate (IPP) and dimethylallyl diphosphate (DMAPP). Acts in the terminal step of the DOXP/MEP pathway for isoprenoid precursor biosynthesis. The protein is 4-hydroxy-3-methylbut-2-enyl diphosphate reductase of Pseudoalteromonas translucida (strain TAC 125).